A 294-amino-acid chain; its full sequence is Endonuclease G, mitochondrial (294 aa).

The N-terminal 44 residues, 1 to 44 (MRALRAGLTLALGAGLGAAAEHWRRREGKAPGLLGRVPLLPVVA), are a transit peptide targeting the mitochondrion. A Phosphothreonine modification is found at Thr125. Catalysis depends on His138, which acts as the Proton acceptor. Residue Asn169 participates in Mg(2+) binding. Residues 283 to 293 (AGNLKAITAGS) are essential for deoxyribonuclease activity.

The protein belongs to the DNA/RNA non-specific endonuclease family. As to quaternary structure, homodimer; disulfide-linked. Homodimerization is essential for its activity. Interacts with YWHAG. Mg(2+) is required as a cofactor. Post-translationally, GSK3-beta-mediated phosphorylation at Thr-125 is necessary for its interaction with YWHAG and the induction of autophagy.

The protein resides in the mitochondrion. Endonuclease that preferentially catalyzes the cleavage of double-stranded 5-hydroxymethylcytosine (5hmC)-modified DNA. The 5hmC-modified nucleotide does not increase the binding affinity, but instead increases the efficiency of cutting and specifies the site of cleavage for the modified DNAs. Shows significantly higher affinity for four-stranded Holliday junction over duplex and single-stranded DNAs. Promotes conservative recombination when the DNA is 5hmC-modified. Promotes autophagy through the suppression of mTOR by its phosphorylation-mediated interaction with YWHAG and its endonuclease activity-mediated DNA damage response. GSK3-beta mediated phosphorylation of ENDOG enhances its interaction with YWHAG, leading to the release of TSC2 and PIK3C3 from YWHAG resulting in mTOR pathway suppression and autophagy initiation. Promotes cleavage of mtDNA in response to oxidative and nitrosative stress, in turn inducing compensatory mtDNA replication. The polypeptide is Endonuclease G, mitochondrial (Endog) (Mus musculus (Mouse)).